Here is a 259-residue protein sequence, read N- to C-terminus: NAD kinase (259 aa).

The Proton acceptor role is filled by D49. NAD(+) is bound by residues D49–G50, R54, N118–E119, D148, A156, T159–S164, and A183.

This sequence belongs to the NAD kinase family. Requires a divalent metal cation as cofactor.

The protein localises to the cytoplasm. It catalyses the reaction NAD(+) + ATP = ADP + NADP(+) + H(+). Its function is as follows. Involved in the regulation of the intracellular balance of NAD and NADP, and is a key enzyme in the biosynthesis of NADP. Catalyzes specifically the phosphorylation on 2'-hydroxyl of the adenosine moiety of NAD to yield NADP. This chain is NAD kinase, found in Xylella fastidiosa (strain 9a5c).